The sequence spans 494 residues: 4-trimethylaminobutyraldehyde dehydrogenase (494 aa).

Serine 2 is subject to N-acetylserine. Lysine 30 carries the N6-acetyllysine; alternate modification. N6-succinyllysine; alternate is present on lysine 30. Position 59 is an N6-succinyllysine (lysine 59). NAD(+)-binding positions include lysine 180 and 232–236 (GSVPT). Residue glutamate 254 is the Proton acceptor of the active site. Cysteine 288 acts as the Nucleophile in catalysis. Residues lysine 298 and lysine 344 each carry the N6-acetyllysine modification. Glutamate 391 contacts NAD(+).

It belongs to the aldehyde dehydrogenase family. As to quaternary structure, homotetramer.

Its subcellular location is the cytoplasm. The protein localises to the cytosol. It catalyses the reaction 4-(trimethylamino)butanal + NAD(+) + H2O = 4-(trimethylamino)butanoate + NADH + 2 H(+). The catalysed reaction is an aldehyde + NAD(+) + H2O = a carboxylate + NADH + 2 H(+). The enzyme catalyses 4-aminobutanal + NAD(+) + H2O = 4-aminobutanoate + NADH + 2 H(+). It carries out the reaction formaldehyde + NAD(+) + H2O = formate + NADH + 2 H(+). It catalyses the reaction acetaldehyde + NAD(+) + H2O = acetate + NADH + 2 H(+). The catalysed reaction is imidazole-4-acetaldehyde + NAD(+) + H2O = imidazole-4-acetate + NADH + 2 H(+). The enzyme catalyses acrolein + NAD(+) + H2O = acrylate + NADH + 2 H(+). It carries out the reaction (5-hydroxyindol-3-yl)acetaldehyde + NAD(+) + H2O = (5-hydroxyindol-3-yl)acetate + NADH + 2 H(+). It catalyses the reaction 3,4-dihydroxyphenylacetaldehyde + NAD(+) + H2O = 3,4-dihydroxyphenylacetate + NADH + 2 H(+). The catalysed reaction is spermine monoaldehyde + NAD(+) + H2O = N-(2-carboxyethyl)spermidine + NADH + 2 H(+). The enzyme catalyses propanal + NAD(+) + H2O = propanoate + NADH + 2 H(+). It carries out the reaction butanal + NAD(+) + H2O = butanoate + NADH + 2 H(+). It catalyses the reaction pentanal + NAD(+) + H2O = pentanoate + NADH + 2 H(+). The catalysed reaction is hexanal + NAD(+) + H2O = hexanoate + NADH + 2 H(+). The protein operates within amine and polyamine biosynthesis; carnitine biosynthesis. In terms of biological role, converts gamma-trimethylaminobutyraldehyde into gamma-butyrobetaine with high efficiency (in vitro). Can catalyze the irreversible oxidation of a broad range of aldehydes to the corresponding acids in an NAD-dependent reaction, but with low efficiency. Catalyzes the oxidation of aldehydes arising from biogenic amines and polyamines. This Bos taurus (Bovine) protein is 4-trimethylaminobutyraldehyde dehydrogenase (ALDH9A1).